A 387-amino-acid polypeptide reads, in one-letter code: Patatin-02 (387 aa).

Positions 1–23 (MATTKSFLILIVMILATTSSTFA) are cleaved as a signal peptide. In terms of domain architecture, PNPLA spans 32 to 230 (LSIDGGGIKG…TVADPALLSV (199 aa)). The GXGXXG motif lies at 36-41 (GGGIKG). The short motif at 75–79 (GTSTG) is the GXSXG element. S77 serves as the catalytic Nucleophile. Residue N115 is glycosylated (N-linked (GlcNAc...) asparagine). The active-site Proton acceptor is the D216. A DGA/G motif is present at residues 216–218 (DGA). The stretch at 361–385 (ETYEEALKRFAKLLSDRKKLRANKA) forms a coiled coil.

The protein belongs to the patatin family. As to expression, tuber and stolon.

It is found in the vacuole. Probable lipolytic acyl hydrolase (LAH), an activity which is thought to be involved in the response of tubers to pathogens. The sequence is that of Patatin-02 from Solanum tuberosum (Potato).